The chain runs to 177 residues: Large ribosomal subunit protein uL6 (177 aa).

This sequence belongs to the universal ribosomal protein uL6 family. Part of the 50S ribosomal subunit.

This protein binds to the 23S rRNA, and is important in its secondary structure. It is located near the subunit interface in the base of the L7/L12 stalk, and near the tRNA binding site of the peptidyltransferase center. The sequence is that of Large ribosomal subunit protein uL6 from Azoarcus sp. (strain BH72).